The sequence spans 400 residues: MGKVRHSPKEGYFGEFGGRYSPEILHDALAELETTYKKLKKNKHFKKELEYYRKNYIGRPSPLTYAERLTKVWDGARIWLKREDLNHTGAHKINNTIGQVLIAKAMGKTRIIAETGAGQHGVATATVGAMFQMETVVYMGEEDLRRQELNAIRMRMMGAKVVGVSSGTATLKDATSEAMRDWALNVSNTHYIVGSSIGPHPFPTIVRDFQSVIGIESRKQFKKVNGKLPNAVIACVGGGSNSIGMFYGFLRDKKVKLFGVEAGGYSTEPGHHSATIQFGRTGFLHGTKTLVIQDEFGQIVPAHSVSAGLDYPGVGPEHAYFHKSGRVTYVNVDDDGALDAFLEICQIEGIIPALETAHAFRFAKDLAKSMGKKEDILICLSGRGDKDVAEVARLRKGEFS.

Lys-92 bears the N6-(pyridoxal phosphate)lysine mark.

It belongs to the TrpB family. As to quaternary structure, tetramer of two alpha and two beta chains. Pyridoxal 5'-phosphate serves as cofactor.

It catalyses the reaction (1S,2R)-1-C-(indol-3-yl)glycerol 3-phosphate + L-serine = D-glyceraldehyde 3-phosphate + L-tryptophan + H2O. The protein operates within amino-acid biosynthesis; L-tryptophan biosynthesis; L-tryptophan from chorismate: step 5/5. The beta subunit is responsible for the synthesis of L-tryptophan from indole and L-serine. The polypeptide is Tryptophan synthase beta chain (Leptospira borgpetersenii serovar Hardjo-bovis (strain JB197)).